Here is a 213-residue protein sequence, read N- to C-terminus: LexA repressor (213 aa).

The segment at residues 29–49 is a DNA-binding region (H-T-H motif); that stretch reads RAEIAQALGFRSPNAAEDHLK. Active-site for autocatalytic cleavage activity residues include serine 131 and lysine 168.

Belongs to the peptidase S24 family. Homodimer.

The enzyme catalyses Hydrolysis of Ala-|-Gly bond in repressor LexA.. Represses a number of genes involved in the response to DNA damage (SOS response), including recA and lexA. In the presence of single-stranded DNA, RecA interacts with LexA causing an autocatalytic cleavage which disrupts the DNA-binding part of LexA, leading to derepression of the SOS regulon and eventually DNA repair. The protein is LexA repressor of Bordetella avium (strain 197N).